The primary structure comprises 466 residues: Glutamate--tRNA ligase 1 (466 aa).

The 'HIGH' region signature appears at 9–19 (PSPTGMLHIGG). The short motif at 238 to 242 (KLSKR) is the 'KMSKS' region element. Lys-241 contacts ATP.

This sequence belongs to the class-I aminoacyl-tRNA synthetase family. Glutamate--tRNA ligase type 1 subfamily. As to quaternary structure, monomer.

The protein resides in the cytoplasm. It carries out the reaction tRNA(Glu) + L-glutamate + ATP = L-glutamyl-tRNA(Glu) + AMP + diphosphate. Catalyzes the attachment of glutamate to tRNA(Glu) in a two-step reaction: glutamate is first activated by ATP to form Glu-AMP and then transferred to the acceptor end of tRNA(Glu). In Acidiphilium cryptum (strain JF-5), this protein is Glutamate--tRNA ligase 1.